The sequence spans 513 residues: ATP synthase subunit alpha (513 aa).

169–176 (GDRQTGKT) provides a ligand contact to ATP.

The protein belongs to the ATPase alpha/beta chains family. As to quaternary structure, F-type ATPases have 2 components, CF(1) - the catalytic core - and CF(0) - the membrane proton channel. CF(1) has five subunits: alpha(3), beta(3), gamma(1), delta(1), epsilon(1). CF(0) has three main subunits: a(1), b(2) and c(9-12). The alpha and beta chains form an alternating ring which encloses part of the gamma chain. CF(1) is attached to CF(0) by a central stalk formed by the gamma and epsilon chains, while a peripheral stalk is formed by the delta and b chains.

It is found in the cell inner membrane. The catalysed reaction is ATP + H2O + 4 H(+)(in) = ADP + phosphate + 5 H(+)(out). Functionally, produces ATP from ADP in the presence of a proton gradient across the membrane. The alpha chain is a regulatory subunit. This is ATP synthase subunit alpha from Shewanella sp. (strain ANA-3).